The chain runs to 89 residues: MENKKVAKALPIQDPYLNALRKEKINVAIYLVNGVKLQGRVDSFDQFVVLLRSNVTQMVYKHAISTIVPARDPKAYEFEAQETEAKDSE.

The 60-residue stretch at 14–73 (DPYLNALRKEKINVAIYLVNGVKLQGRVDSFDQFVVLLRSNVTQMVYKHAISTIVPARDP) folds into the Sm domain.

This sequence belongs to the Hfq family. Homohexamer.

RNA chaperone that binds small regulatory RNA (sRNAs) and mRNAs to facilitate mRNA translational regulation in response to envelope stress, environmental stress and changes in metabolite concentrations. Also binds with high specificity to tRNAs. The polypeptide is RNA-binding protein Hfq (Hydrogenovibrio crunogenus (strain DSM 25203 / XCL-2) (Thiomicrospira crunogena)).